We begin with the raw amino-acid sequence, 228 residues long: MSNFVAEKSIAAVRAVDEVRDGMLVGLGTGSTAAYAVKSLSERIKHGLRITAVATSQATEALALRLAVPLVPFQQLSAVDLTIDGADEIDDRFQAIKGGGGALLREKITESASTRVIIIADSSKLVAQLGKFPLPVEVVPFATEFVRARLSALGARVTVREAGGTPFLTDQGNYILDAALDEIPRPREIAAAITTIPGVLEHGLFLDEIDTIMIARGDMVEVRHRGEA.

Residues 29–32 (TGST), 84–87 (DGAD), and 97–100 (KGGG) each bind substrate. Catalysis depends on E106, which acts as the Proton acceptor. K124 is a binding site for substrate.

Belongs to the ribose 5-phosphate isomerase family. In terms of assembly, homodimer.

It carries out the reaction aldehydo-D-ribose 5-phosphate = D-ribulose 5-phosphate. The protein operates within carbohydrate degradation; pentose phosphate pathway; D-ribose 5-phosphate from D-ribulose 5-phosphate (non-oxidative stage): step 1/1. Functionally, catalyzes the reversible conversion of ribose-5-phosphate to ribulose 5-phosphate. This is Ribose-5-phosphate isomerase A from Sphingopyxis alaskensis (strain DSM 13593 / LMG 18877 / RB2256) (Sphingomonas alaskensis).